The primary structure comprises 469 residues: Adenosylhomocysteinase (469 aa).

Substrate contacts are provided by threonine 63, aspartate 139, and glutamate 164. Threonine 165–threonine 167 provides a ligand contact to NAD(+). The substrate site is built by lysine 194 and aspartate 198. Residues asparagine 199, glycine 228–glycine 233, glutamate 251, asparagine 300, isoleucine 321–histidine 323, and asparagine 375 each bind NAD(+).

This sequence belongs to the adenosylhomocysteinase family. It depends on NAD(+) as a cofactor.

The protein localises to the cytoplasm. The enzyme catalyses S-adenosyl-L-homocysteine + H2O = L-homocysteine + adenosine. It participates in amino-acid biosynthesis; L-homocysteine biosynthesis; L-homocysteine from S-adenosyl-L-homocysteine: step 1/1. May play a key role in the regulation of the intracellular concentration of adenosylhomocysteine. This chain is Adenosylhomocysteinase, found in Pseudomonas putida (strain W619).